We begin with the raw amino-acid sequence, 116 residues long: NADH-ubiquinone oxidoreductase chain 3 (116 aa).

A run of 3 helical transmembrane segments spans residues 4–24 (LIITLITNSLLSTIIIIIAFW), 56–76 (FFLVAITFLLFDLEIALLLPL), and 88–108 (TLILSYCLIMLLTVGLAYEWI).

This sequence belongs to the complex I subunit 3 family. As to quaternary structure, core subunit of respiratory chain NADH dehydrogenase (Complex I) which is composed of 45 different subunits. Interacts with TMEM186. Interacts with TMEM242.

The protein localises to the mitochondrion inner membrane. The catalysed reaction is a ubiquinone + NADH + 5 H(+)(in) = a ubiquinol + NAD(+) + 4 H(+)(out). Functionally, core subunit of the mitochondrial membrane respiratory chain NADH dehydrogenase (Complex I) which catalyzes electron transfer from NADH through the respiratory chain, using ubiquinone as an electron acceptor. Essential for the catalytic activity of complex I. The protein is NADH-ubiquinone oxidoreductase chain 3 of Didelphis virginiana (North American opossum).